A 326-amino-acid chain; its full sequence is 5-dehydro-2-deoxygluconokinase (326 aa).

Belongs to the carbohydrate kinase PfkB family.

It carries out the reaction 5-dehydro-2-deoxy-D-gluconate + ATP = 6-phospho-5-dehydro-2-deoxy-D-gluconate + ADP + H(+). It participates in polyol metabolism; myo-inositol degradation into acetyl-CoA; acetyl-CoA from myo-inositol: step 5/7. Functionally, catalyzes the phosphorylation of 5-dehydro-2-deoxy-D-gluconate (2-deoxy-5-keto-D-gluconate or DKG) to 6-phospho-5-dehydro-2-deoxy-D-gluconate (DKGP). In Lacticaseibacillus casei (Lactobacillus casei), this protein is 5-dehydro-2-deoxygluconokinase.